The sequence spans 545 residues: Chaperonin GroEL (545 aa).

Residues 29 to 32 (TLGP), K50, 86 to 90 (DGTTT), G413, and D495 each bind ATP.

This sequence belongs to the chaperonin (HSP60) family. As to quaternary structure, forms a cylinder of 14 subunits composed of two heptameric rings stacked back-to-back. Interacts with the co-chaperonin GroES.

The protein resides in the cytoplasm. It catalyses the reaction ATP + H2O + a folded polypeptide = ADP + phosphate + an unfolded polypeptide.. Functionally, together with its co-chaperonin GroES, plays an essential role in assisting protein folding. The GroEL-GroES system forms a nano-cage that allows encapsulation of the non-native substrate proteins and provides a physical environment optimized to promote and accelerate protein folding. In Borreliella afzelii (strain PKo) (Borrelia afzelii), this protein is Chaperonin GroEL.